A 375-amino-acid polypeptide reads, in one-letter code: Trans-enoyl reductase cghC (375 aa).

48-51 (VDTK) serves as a coordination point for NADP(+). A substrate-binding site is contributed by 135–142 (NAWYTSGW). Residues 188–191 (SSST), 211–214 (SARN), and 276–277 (LD) contribute to the NADP(+) site. 297–301 (GPELV) is a binding site for substrate. 366-367 (VS) provides a ligand contact to NADP(+).

It belongs to the zinc-containing alcohol dehydrogenase family. Monomer.

The catalysed reaction is (2S,4S)-4-hydroxy-4-methylglutamate + 8 malonyl-CoA + 3 S-adenosyl-L-methionine + ATP + 8 NADPH + 11 H(+) = (2S)-3-[(2S)-3,5-dioxo-4-[(2E,4R,6R,8E,10E,12E)-4,6,12-trimethyltetradeca-2,8,10,12-tetraenoyl]pyrrolidin-2-yl]-2-hydroxy-2-methylpropanoate + AMP + 3 S-adenosyl-L-homocysteine + 8 CO2 + diphosphate + 8 NADP(+) + 8 CoA + 6 H2O. It participates in secondary metabolite biosynthesis. Its function is as follows. Trans-enoyl reductase; part of the gene cluster that mediates the biosynthesis of the tetramic acid Sch210972, a potential anti-HIV fungal natural product that contains a decalin core. The PKS module of cghG together with the enoylreductase cghC catalyze the formation of the polyketide unit which is then conjugated to 4-hydroxyl-4-methyl glutamate (HMG) by the condensation domain of the cghG NRPS module. One unique structural feature of Sch210972 is the tetramic acid motif proposed to be derived from the non-proteinogenic amino acid HMG, by a Dieckmann-type condensation catalyzed by the reductase domain of cghG. The aldolase cghB catalyzes the aldol condensation of 2 molecules of pyruvic acid to yield the intermediate 4-hydroxyl-4-methyl-2-oxoglutarate (HMOG), which can then be stereoselectively transaminated by an unidentified enzyme to form HMG. The Diels-Alderase cghA then uses the Dieckmann product released by cghG as substrate and catalyzes the Diels-Alder cycloaddition to form the decalin ring of Sch210972. CghA also suppresses the nonenzymatic formation of the alternative stereoisomer. The sequence is that of Trans-enoyl reductase cghC from Chaetomium globosum (strain ATCC 6205 / CBS 148.51 / DSM 1962 / NBRC 6347 / NRRL 1970) (Soil fungus).